Consider the following 707-residue polypeptide: Terpene cyclase/mutase atnI (707 aa).

Positions 1–20 are enriched in polar residues; sequence MGQHIASSESSTNGHVSLET. Positions 1 to 22 are disordered; that stretch reads MGQHIASSESSTNGHVSLETNG. PFTB repeat units lie at residues 130 to 173, 494 to 535, 571 to 608, and 620 to 661; these read AVEI…RLLG, LRDA…VGKT, TAQG…ETLA, and SRRG…VQTA.

Belongs to the terpene cyclase/mutase family.

Its pathway is secondary metabolite biosynthesis; terpenoid biosynthesis. Its function is as follows. Terpene cyclase/mutase; part of the gene cluster that mediates the biosynthesis of the meroterpenoids arthripenoids. The pathway begins with the HR-PKS atnH that catalyzes two chain-extension steps to form a reduced triketide, which then primes the SAT domain in the NR-PKS atnG to initiate three more cycles of extension to give a linear hexaketide corresponding to the polyketide part of arthripenoids. The FAD-dependent monooxygenase atnJ then performs an oxidative decarboxylation at C11 of the atnH/atnG product, via an electrophilic aromatic hydroxylation with concomitant ipso-decarboxylation. The membrane-bound polyprenyl transferase atnF then introduces a farnesyl group before the FAD-dependent monooxygenase atnK functions as the first epoxidase on terminal C12'-C13' olefin, followed by a second epoxidation on C7'-C8' catalyzed by atnA. The terpene cyclase/mutase atnI then initiates the sequential tricyclic ring formation through protonation of the terminal epoxide and catalyzes the regioselective and stereoselective 6/6/6-tricyclic ring formation. The cytochrome P450 monooxygenase atnM is responsible for hydroxylating both C1' and C10'. The next steps may involve ketoreduction and acetyl transfer by the ketoreductase atnB and the acetyltransferase atnC, and lead to the production of arthripenoid B, the final biosynthetic product of the atn cluster. The hydroquinone moiety in arthripenoid B is prone to undergo spontaneous oxidation to afford a benzoquinone compound, a key intermediate for generating structure diversity. For instance, addition of a cysteine followed by ring contraction gives arthripenoid A, tautomerization gives the main product arthripenoid C, addition of a molecular of water or amine affords arthripenoid D or E, respectively, and loss of one water forms arthripenoid F. The polypeptide is Terpene cyclase/mutase atnI (Arthrinium sp).